Here is a 319-residue protein sequence, read N- to C-terminus: Ribosomal RNA small subunit methyltransferase H (319 aa).

Residues 35–37 (AGH), Asp55, Phe84, Asp104, and Gln111 contribute to the S-adenosyl-L-methionine site.

The protein belongs to the methyltransferase superfamily. RsmH family.

It localises to the cytoplasm. It carries out the reaction cytidine(1402) in 16S rRNA + S-adenosyl-L-methionine = N(4)-methylcytidine(1402) in 16S rRNA + S-adenosyl-L-homocysteine + H(+). In terms of biological role, specifically methylates the N4 position of cytidine in position 1402 (C1402) of 16S rRNA. The sequence is that of Ribosomal RNA small subunit methyltransferase H from Enterococcus hirae.